The chain runs to 239 residues: Ribitol-5-phosphate cytidylyltransferase (239 aa).

CTP contacts are provided by residues 7–10 (FAGG) and 80–86 (GETGQMS).

This sequence belongs to the IspD/TarI cytidylyltransferase family. TarI subfamily.

The enzyme catalyses D-ribitol 5-phosphate + CTP + H(+) = CDP-L-ribitol + diphosphate. It participates in cell wall biogenesis; poly(ribitol phosphate) teichoic acid biosynthesis. In terms of biological role, catalyzes the transfer of the cytidylyl group of CTP to D-ribitol 5-phosphate. This is Ribitol-5-phosphate cytidylyltransferase from Streptococcus agalactiae serotype Ia (strain ATCC 27591 / A909 / CDC SS700).